A 199-amino-acid chain; its full sequence is MSFYPPSLVNLIKQLSKLPGIGEKTAERLALHILRGSVKDAQALAESISEAKETVRLCSVCYGLADSDPCHICRDATRDQDVVCVVEQGTDMVALEKSGAFKGRYHVLQGCLSPMNGVGPDNLRIRELVERLKKEKIKEVVVATGTSVEGESTANYLRQVLEGSGVKITRIASGVPIGGDLKYTDALTLKRALDSRHCL.

Residues 58 to 73 (CSVCYGLADSDPCHIC) form a C4-type zinc finger. A Toprim domain is found at 81–176 (DVVCVVEQGT…KITRIASGVP (96 aa)).

Belongs to the RecR family.

Functionally, may play a role in DNA repair. It seems to be involved in an RecBC-independent recombinational process of DNA repair. It may act with RecF and RecO. The protein is Recombination protein RecR of Desulfatibacillum aliphaticivorans.